A 359-amino-acid polypeptide reads, in one-letter code: Endoglucanase 1 (359 aa).

Disordered regions lie at residues 1–26 and 47–72; these read MENP…RGGR and TGAS…DAGT. A compositionally biased stretch (basic residues) spans 13 to 24; sequence LRRRRSERRARG. Over residues 60-72 the composition is skewed to low complexity; it reads APSADSGTADAGT. The active site involves aspartate 154. Cysteine 155 and cysteine 199 are disulfide-bonded. The active-site Proton donor is the aspartate 192. Aspartate 339 functions as the Nucleophile in the catalytic mechanism.

It belongs to the glycosyl hydrolase 6 (cellulase B) family.

The enzyme catalyses Endohydrolysis of (1-&gt;4)-beta-D-glucosidic linkages in cellulose, lichenin and cereal beta-D-glucans.. Its function is as follows. CMCase I preferentially hydrolyzes carboxymethyl cellulose (CMC). The chain is Endoglucanase 1 (casA) from Streptomyces sp. (strain KSM-9).